The chain runs to 309 residues: Postacrosomal sheath WW domain-binding protein (309 aa).

The GRAM domain occupies 45 to 87; it reads GRKTGTLFLTSYRVIFITSCSISDPMLSFMMPFDLMTNLTVEQ. Tandem repeats lie at residues 175 to 181, 182 to 188, 189 to 195, 217 to 223, 224 to 230, 231 to 237, 238 to 244, 245 to 251, 252 to 258, and 259 to 265. The tract at residues 175-265 is 10 X 7 AA tandem repeat of Y-G-X-P-P-X-G; sequence YGAPPAGYGA…PLGYGAPPAG (91 aa). The PPxY motif signature appears at 186-189; sequence PPGY. Positions 251–272 are enriched in low complexity; that stretch reads GYGAPPLGYGAPPAGNEGPPAG. A disordered region spans residues 251-309; it reads GYGAPPLGYGAPPAGNEGPPAGYRASPAGSGARPQESTAAQAPENEASLPSASSSQVHS. Residues 298-309 are compositionally biased toward polar residues; sequence SLPSASSSQVHS.

As to expression, expressed in testis.

May play a role in meiotic resumption and pronuclear formation, mediated by a WW domain-signaling pathway during fertilization. The protein is Postacrosomal sheath WW domain-binding protein (WBP2NL) of Homo sapiens (Human).